The chain runs to 284 residues: ATP synthase subunit beta, chloroplastic (284 aa).

The protein belongs to the ATPase alpha/beta chains family. In terms of assembly, F-type ATPases have 2 components, CF(1) - the catalytic core - and CF(0) - the membrane proton channel. CF(1) has five subunits: alpha(3), beta(3), gamma(1), delta(1), epsilon(1). CF(0) has four main subunits: a(1), b(1), b'(1) and c(9-12).

The protein localises to the plastid. It localises to the chloroplast thylakoid membrane. It carries out the reaction ATP + H2O + 4 H(+)(in) = ADP + phosphate + 5 H(+)(out). In terms of biological role, produces ATP from ADP in the presence of a proton gradient across the membrane. The catalytic sites are hosted primarily by the beta subunits. This chain is ATP synthase subunit beta, chloroplastic (atpB), found in Asplenium nidus (Bird's nest fern).